A 45-amino-acid polypeptide reads, in one-letter code: Large ribosomal subunit protein bL34 (45 aa).

2 stretches are compositionally biased toward basic residues: residues 1–15 (MKAK…RKRA) and 22–45 (MKTK…IAIK). A disordered region spans residues 1-45 (MKAKSHLSNKKRKRASGFLARMKTKAGRKILARRRAKGRKRIAIK).

This sequence belongs to the bacterial ribosomal protein bL34 family.

The protein is Large ribosomal subunit protein bL34 of Sulfurihydrogenibium sp. (strain YO3AOP1).